The primary structure comprises 698 residues: Long-chain-fatty-acid--CoA ligase 1 (698 aa).

Met1 carries the N-acetylmethionine modification. Tyr9 carries the post-translational modification 3'-nitrotyrosine. Position 84 is a phosphotyrosine (Tyr84). A glycan (O-linked (GlcNAc) serine) is linked at Ser135. Residues Lys356 and Lys386 each carry the N6-acetyllysine modification. Position 620 is a phosphoserine (Ser620). Lys632 carries the post-translational modification N6-acetyllysine.

Belongs to the ATP-dependent AMP-binding enzyme family. Requires Mg(2+) as cofactor.

The protein resides in the microsome membrane. The protein localises to the mitochondrion outer membrane. It is found in the peroxisome membrane. It localises to the endoplasmic reticulum membrane. It carries out the reaction a long-chain fatty acid + ATP + CoA = a long-chain fatty acyl-CoA + AMP + diphosphate. The catalysed reaction is (5Z,8Z,11Z,14Z)-eicosatetraenoate + ATP + CoA = (5Z,8Z,11Z,14Z)-eicosatetraenoyl-CoA + AMP + diphosphate. The enzyme catalyses 3,7,11,15-tetramethylhexadecanoate + ATP + CoA = phytanoyl-CoA + AMP + diphosphate. It catalyses the reaction hexadecanoate + ATP + CoA = hexadecanoyl-CoA + AMP + diphosphate. It carries out the reaction (E)-hexadec-2-enoate + ATP + CoA = (2E)-hexadecenoyl-CoA + AMP + diphosphate. The catalysed reaction is 2,6,10,14-tetramethylpentadecanoate + ATP + CoA = pristanoyl-CoA + AMP + diphosphate. The enzyme catalyses 14,15-epoxy-(5Z,8Z,11Z)-eicosatrienoate + ATP + CoA = 14,15-epoxy-(5Z,8Z,11Z)-eicosatrienoyl-CoA + AMP + diphosphate. It catalyses the reaction 5-hydroxy-(6E,8Z,11Z,14Z)-eicosatetraenoate + ATP + CoA = 5-hydroxy-(6E,8Z,11Z,14Z)-eicosatetraenoyl-CoA + AMP + diphosphate. It carries out the reaction 12-hydroxy-(5Z,8Z,10E,14Z)-eicosatetraenoate + ATP + CoA = 12-hydroxy-(5Z,8Z,10E,14Z)-eicosatetraenoyl-CoA + AMP + diphosphate. The catalysed reaction is 15-hydroxy-(5Z,8Z,11Z,13E)-eicosatetraenoate + ATP + CoA = 15-hydroxy-(5Z,8Z,11Z,13E)-eicosatetraenoyl-CoA + AMP + diphosphate. The enzyme catalyses (9Z)-octadecenoate + ATP + CoA = (9Z)-octadecenoyl-CoA + AMP + diphosphate. Its activity is regulated as follows. Inhibited at high temperature and by arachidonate. In terms of biological role, catalyzes the conversion of long-chain fatty acids to their active form acyl-CoAs for both synthesis of cellular lipids, and degradation via beta-oxidation. Preferentially uses palmitoleate, oleate and linoleate. Preferentially activates arachidonate than epoxyeicosatrienoic acids (EETs) or hydroxyeicosatrienoic acids (HETEs). In Cavia porcellus (Guinea pig), this protein is Long-chain-fatty-acid--CoA ligase 1.